A 451-amino-acid polypeptide reads, in one-letter code: Serine--tRNA ligase, cytoplasmic (451 aa).

Cys213 and Cys244 form a disulfide bridge. Position 238-240 (Thr238–Glu240) interacts with L-serine. ATP contacts are provided by residues Arg269 to Glu271 and Val285. L-serine is bound at residue Glu292. Glu358–Ser361 provides a ligand contact to ATP. Thr396 lines the L-serine pocket.

This sequence belongs to the class-II aminoacyl-tRNA synthetase family. Type-1 seryl-tRNA synthetase subfamily. As to quaternary structure, homodimer. The tRNA molecule binds across the dimer.

Its subcellular location is the cytoplasm. The protein localises to the cytosol. It catalyses the reaction tRNA(Ser) + L-serine + ATP = L-seryl-tRNA(Ser) + AMP + diphosphate + H(+). In terms of biological role, catalyzes the attachment of serine to tRNA(Ser) in a two-step reaction: serine is first activated by ATP to form Ser-AMP and then transferred to the acceptor end of tRNA(Ser). The chain is Serine--tRNA ligase, cytoplasmic from Arabidopsis thaliana (Mouse-ear cress).